The sequence spans 170 residues: Xanthine-guanine phosphoribosyltransferase (170 aa).

5-phospho-alpha-D-ribose 1-diphosphate-binding positions include 41–42 and 98–106; these read RG and DDLTDTGKT. A Mg(2+)-binding site is contributed by Asp99. Residue Asp102 participates in guanine binding. Asp102 contacts xanthine. Residue 102–106 participates in GMP binding; the sequence is DTGKT.

It belongs to the purine/pyrimidine phosphoribosyltransferase family. XGPT subfamily. In terms of assembly, homotetramer. It depends on Mg(2+) as a cofactor.

The protein resides in the cell inner membrane. It carries out the reaction GMP + diphosphate = guanine + 5-phospho-alpha-D-ribose 1-diphosphate. The catalysed reaction is XMP + diphosphate = xanthine + 5-phospho-alpha-D-ribose 1-diphosphate. The enzyme catalyses IMP + diphosphate = hypoxanthine + 5-phospho-alpha-D-ribose 1-diphosphate. The protein operates within purine metabolism; GMP biosynthesis via salvage pathway; GMP from guanine: step 1/1. Its pathway is purine metabolism; XMP biosynthesis via salvage pathway; XMP from xanthine: step 1/1. Purine salvage pathway enzyme that catalyzes the transfer of the ribosyl-5-phosphate group from 5-phospho-alpha-D-ribose 1-diphosphate (PRPP) to the N9 position of the 6-oxopurines guanine and xanthine to form the corresponding ribonucleotides GMP (guanosine 5'-monophosphate) and XMP (xanthosine 5'-monophosphate), with the release of PPi. To a lesser extent, also acts on hypoxanthine. The sequence is that of Xanthine-guanine phosphoribosyltransferase from Brucella abortus (strain 2308).